The following is a 310-amino-acid chain: MKTLTRKLSRTAITLVLVILAFIAIFRAWVYYTESPWTRDARFSADVVAIAPDVAGLITNVSVHDNQLVKKDQILFTIDQPRYKKALEEAEADVAYYQVLAQEKRQEAGRRNRLGVQAMSREEIDQANNVLQTVLHQLAKAQATRDLAKLDLERTVIRAPADGWVTNLNVYTGEFITRGSTAVALVKQHSFYVLAYMEETKLEGVRPGYRAEITPLGSNKVLKGTVDSVAAGVTNASSTRDAKGMATIDSNLEWVRLAQRVPVRIRLDDQQDNLWPAGTTATVVITGKQDRDETQDSFFRKMAHRLREFG.

Residues 12-32 (AITLVLVILAFIAIFRAWVYY) traverse the membrane as a helical segment.

It belongs to the membrane fusion protein (MFP) (TC 8.A.1) family.

Its subcellular location is the cell inner membrane. Its function is as follows. Forms an efflux pump with AaeB. The protein is p-hydroxybenzoic acid efflux pump subunit AaeA of Citrobacter koseri (strain ATCC BAA-895 / CDC 4225-83 / SGSC4696).